Consider the following 156-residue polypeptide: Small ribosomal subunit protein uS7 (156 aa).

In terms of assembly, part of the 30S ribosomal subunit. Contacts proteins S9 and S11. Binds to the C-terminus of IF3 and to the C-terminus of Era.

In terms of biological role, one of the primary rRNA binding proteins, it binds directly to 3'-end of the 16S rRNA where it nucleates assembly of the head domain of the 30S subunit. Is located at the subunit interface close to the decoding center. Binds mRNA and the E site tRNA blocking its exit path in the ribosome. This blockage implies that this section of the ribosome must be able to move to release the deacetylated tRNA. The polypeptide is Small ribosomal subunit protein uS7 (rpsG) (Thermus thermophilus (strain ATCC 27634 / DSM 579 / HB8)).